The chain runs to 168 residues: Crossover junction endodeoxyribonuclease RuvC (168 aa).

Catalysis depends on residues aspartate 8, glutamate 68, and aspartate 140. 3 residues coordinate Mg(2+): aspartate 8, glutamate 68, and aspartate 140.

The protein belongs to the RuvC family. Homodimer which binds Holliday junction (HJ) DNA. The HJ becomes 2-fold symmetrical on binding to RuvC with unstacked arms; it has a different conformation from HJ DNA in complex with RuvA. In the full resolvosome a probable DNA-RuvA(4)-RuvB(12)-RuvC(2) complex forms which resolves the HJ. Mg(2+) is required as a cofactor.

The protein localises to the cytoplasm. It catalyses the reaction Endonucleolytic cleavage at a junction such as a reciprocal single-stranded crossover between two homologous DNA duplexes (Holliday junction).. Functionally, the RuvA-RuvB-RuvC complex processes Holliday junction (HJ) DNA during genetic recombination and DNA repair. Endonuclease that resolves HJ intermediates. Cleaves cruciform DNA by making single-stranded nicks across the HJ at symmetrical positions within the homologous arms, yielding a 5'-phosphate and a 3'-hydroxyl group; requires a central core of homology in the junction. The consensus cleavage sequence is 5'-(A/T)TT(C/G)-3'. Cleavage occurs on the 3'-side of the TT dinucleotide at the point of strand exchange. HJ branch migration catalyzed by RuvA-RuvB allows RuvC to scan DNA until it finds its consensus sequence, where it cleaves and resolves the cruciform DNA. This chain is Crossover junction endodeoxyribonuclease RuvC, found in Gluconobacter oxydans (strain 621H) (Gluconobacter suboxydans).